A 36-amino-acid polypeptide reads, in one-letter code: Peroxiredoxin-4 (36 aa).

Belongs to the peroxiredoxin family. AhpC/Prx1 subfamily. As to quaternary structure, homodimer; disulfide-linked, upon oxidation. In terms of tissue distribution, venom gland.

It localises to the secreted. The enzyme catalyses a hydroperoxide + [thioredoxin]-dithiol = an alcohol + [thioredoxin]-disulfide + H2O. Venom peroxiredoxin enzyme that may play a role as part of a redox pathway leading to the structural/functional diversification of toxins through a disulfide bond engineering mechanism. The sequence is that of Peroxiredoxin-4 from Crotalus atrox (Western diamondback rattlesnake).